Reading from the N-terminus, the 497-residue chain is Zinc finger protein ZIC 2-B (497 aa).

Disordered stretches follow at residues 58 to 107 (HMGA…TSQA) and 143 to 180 (SAAA…PQGH). The span at 66–88 (PGGGSGGGSGGGGGAGPNGGAGA) shows a compositional bias: gly residues. Over residues 97–107 (PGQTSAFTSQA) the composition is skewed to polar residues. Residues 161-171 (LHHHPHHHHQL) show a composition bias toward basic residues. The C2H2-type 1; atypical zinc finger occupies 273-308 (LICKWIDPEQLNNPKKSCNKTFSTMHELVTHMSVEH). The C2H2-type 2; atypical zinc-finger motif lies at 317–344 (HICFWEECAREGKPFKAKYKLVNHIRVH). 3 C2H2-type zinc fingers span residues 350-374 (FPCP…KRTH), 380-404 (FQCE…MHVH), and 410-432 (YLCK…MKVH). A disordered region spans residues 423–473 (SSLRKHMKVHESSPQGSESSPAASSGYESSTPPGLVSPNSETQNPNLSPAA). Over residues 434–452 (SSPQGSESSPAASSGYESS) the composition is skewed to low complexity. Residues 459-469 (SPNSETQNPNL) are compositionally biased toward polar residues.

The protein belongs to the GLI C2H2-type zinc-finger protein family.

Its subcellular location is the nucleus. The protein localises to the cytoplasm. Its function is as follows. Transcriptional repressor that inhibits neurogenesis and induces neural and neural crest differentiation. Regulates anteroposterior patterning in early development by inhibiting expression of the nodal genes through the inhibition of vegt. Required for gastrulation movements and for proper anterior neural and axial development. May also act as a transcriptional activator. May bind to the minimal GLI-consensus sequence 5'-TGGGTGGTC-3'. In Xenopus laevis (African clawed frog), this protein is Zinc finger protein ZIC 2-B (zic2-b).